A 156-amino-acid chain; its full sequence is Large ribosomal subunit protein eL29 (156 aa).

Over residues 1–26 (MAKSKNHTTHNQSRKWHRNGIKKPRS) the composition is skewed to basic residues. Disordered stretches follow at residues 1-35 (MAKS…LKGV) and 116-156 (RRLC…VKAP). Position 5 is an N6-methyllysine (lysine 5). Serine 31 carries the post-translational modification Phosphoserine. Lysine 33 is modified (N6-acetyllysine). 2 tandem repeats follow at residues 129 to 136 (AEAKAPAK) and 137 to 144 (AQAKAPAQ). The 2 X 8 AA tandem repeats of A-X-A-K-A-P-A-[KQ] stretch occupies residues 129–144 (AEAKAPAKAQAKAPAQ). The segment covering 134-156 (PAKAQAKAPAQAPKGAQAPVKAP) has biased composition (low complexity).

Belongs to the eukaryotic ribosomal protein eL29 family. In terms of assembly, component of the large ribosomal subunit.

It localises to the cytoplasm. Functionally, component of the large ribosomal subunit. The ribosome is a large ribonucleoprotein complex responsible for the synthesis of proteins in the cell. The protein is Large ribosomal subunit protein eL29 (Rpl29) of Rattus norvegicus (Rat).